The sequence spans 315 residues: Sulfate adenylyltransferase subunit 2 1 (315 aa).

Residues 287–315 (DSSSSERQGRAIDHDQSGSMERKKREGYF) form a disordered region. The segment covering 293 to 315 (RQGRAIDHDQSGSMERKKREGYF) has biased composition (basic and acidic residues).

The protein belongs to the PAPS reductase family. CysD subfamily. In terms of assembly, heterodimer composed of CysD, the smaller subunit, and CysN.

It carries out the reaction sulfate + ATP + H(+) = adenosine 5'-phosphosulfate + diphosphate. The protein operates within sulfur metabolism; hydrogen sulfide biosynthesis; sulfite from sulfate: step 1/3. Functionally, with CysN forms the ATP sulfurylase (ATPS) that catalyzes the adenylation of sulfate producing adenosine 5'-phosphosulfate (APS) and diphosphate, the first enzymatic step in sulfur assimilation pathway. APS synthesis involves the formation of a high-energy phosphoric-sulfuric acid anhydride bond driven by GTP hydrolysis by CysN coupled to ATP hydrolysis by CysD. This is Sulfate adenylyltransferase subunit 2 1 from Alkalilimnicola ehrlichii (strain ATCC BAA-1101 / DSM 17681 / MLHE-1).